A 282-amino-acid chain; its full sequence is MAASLSFFSSSIFLSNPNIQSSKHLLFRSPKQLSVAAIATIRSEVATIPILSFDGAEVGSTTLNLKSAPLDTARAVVHRGLTTDLRNQRRGTASTLTRSEVRGGGIKPYPQKKTGRARRGSNRTPLRPGGGVVFGPKPKDWSVKINKKEKRLAISTALSSASENTIVVEEFNDKFEKPKTKEFIDLMRRWGLDPKEKSLFLMTDVSDNVILSSRNIGTLKMLTPRTLNLFDILDSEKLVLTKSAVDFLNERYGDENEWEDEEEDDQEDNDGGEAEESTESSE.

The transit peptide at 1-43 (MAASLSFFSSSIFLSNPNIQSSKHLLFRSPKQLSVAAIATIRS) directs the protein to the chloroplast. 2 disordered regions span residues 86 to 133 (RNQR…GGVV) and 251 to 282 (RYGD…ESSE). Over residues 255 to 282 (ENEWEDEEEDDQEDNDGGEAEESTESSE) the composition is skewed to acidic residues.

It belongs to the universal ribosomal protein uL4 family. In terms of assembly, part of the 50S ribosomal subunit.

It localises to the plastid. The protein localises to the chloroplast. In terms of biological role, this protein binds directly and specifically to 23S rRNA. May play a role in plastid transcriptional regulation. This chain is Large ribosomal subunit protein uL4c (RPL4), found in Nicotiana tabacum (Common tobacco).